The chain runs to 310 residues: N-acetylmuramic acid 6-phosphate etherase (310 aa).

An SIS domain is found at 64 to 227; the sequence is ITARLKSKGR…STSVMIKLGK (164 aa). Glu-92 functions as the Proton donor in the catalytic mechanism. Glu-123 is an active-site residue.

It belongs to the GCKR-like family. MurNAc-6-P etherase subfamily. Homodimer.

The catalysed reaction is N-acetyl-D-muramate 6-phosphate + H2O = N-acetyl-D-glucosamine 6-phosphate + (R)-lactate. The protein operates within amino-sugar metabolism; N-acetylmuramate degradation. In terms of biological role, specifically catalyzes the cleavage of the D-lactyl ether substituent of MurNAc 6-phosphate, producing GlcNAc 6-phosphate and D-lactate. This chain is N-acetylmuramic acid 6-phosphate etherase, found in Prochlorococcus marinus (strain NATL1A).